The primary structure comprises 91 residues: UPF0358 protein Sca_0738 (91 aa).

The protein belongs to the UPF0358 family.

In Staphylococcus carnosus (strain TM300), this protein is UPF0358 protein Sca_0738.